The chain runs to 427 residues: Enolase (427 aa).

Q163 serves as a coordination point for (2R)-2-phosphoglycerate. E205 serves as the catalytic Proton donor. 3 residues coordinate Mg(2+): D242, E285, and D312. 4 residues coordinate (2R)-2-phosphoglycerate: K337, R366, S367, and K388. K337 (proton acceptor) is an active-site residue.

This sequence belongs to the enolase family. It depends on Mg(2+) as a cofactor.

The protein resides in the cytoplasm. The protein localises to the secreted. Its subcellular location is the cell surface. The catalysed reaction is (2R)-2-phosphoglycerate = phosphoenolpyruvate + H2O. The protein operates within carbohydrate degradation; glycolysis; pyruvate from D-glyceraldehyde 3-phosphate: step 4/5. Catalyzes the reversible conversion of 2-phosphoglycerate (2-PG) into phosphoenolpyruvate (PEP). It is essential for the degradation of carbohydrates via glycolysis. The protein is Enolase of Burkholderia lata (strain ATCC 17760 / DSM 23089 / LMG 22485 / NCIMB 9086 / R18194 / 383).